Here is an 84-residue protein sequence, read N- to C-terminus: Dolichol phosphate-mannose biosynthesis regulatory protein (84 aa).

2 helical membrane-spanning segments follow: residues 11–31 (FGLV…VILL) and 49–69 (YAVL…GLFI).

This sequence belongs to the DPM2 family. As to quaternary structure, component of the dolichol-phosphate mannose (DPM) synthase complex composed of DPM1, DPM2 and DPM3; in the complex interacts directly with DPM3. Component of the glycosylphosphatidylinositol-N-acetylglucosaminyltransferase (GPI-GnT) complex composed at least by PIGA, PIGC, PIGH, PIGP, PIGQ, PIGY and DPM2. Interacts with PIGA, PIGC and PIGQ.

It is found in the endoplasmic reticulum membrane. The protein operates within protein modification; protein glycosylation. Regulates the biosynthesis of dolichol phosphate-mannose. Regulatory subunit of the dolichol-phosphate mannose (DPM) synthase complex; essential for the ER localization and stable expression of DPM1. Part of the glycosylphosphatidylinositol-N-acetylglucosaminyltransferase (GPI-GnT) complex that catalyzes the transfer of N-acetylglucosamine from UDP-N-acetylglucosamine to phosphatidylinositol and participates in the first step of GPI biosynthesis. May act by regulating the GPI-GNT complex. The protein is Dolichol phosphate-mannose biosynthesis regulatory protein of Rattus norvegicus (Rat).